Reading from the N-terminus, the 424-residue chain is Histidine--tRNA ligase (424 aa).

The protein belongs to the class-II aminoacyl-tRNA synthetase family. Homodimer.

It is found in the cytoplasm. The catalysed reaction is tRNA(His) + L-histidine + ATP = L-histidyl-tRNA(His) + AMP + diphosphate + H(+). The polypeptide is Histidine--tRNA ligase (Shewanella woodyi (strain ATCC 51908 / MS32)).